Reading from the N-terminus, the 425-residue chain is Calreticulin-1 (425 aa).

A signal peptide spans 1–22; the sequence is MAKLNPKFISLILFALVVIVSA. The N-linked (GlcNAc...) asparagine glycan is linked to N59. A disulfide bond links C108 and C140. Residues Y112, K114, Y131, and D138 each coordinate an alpha-D-glucoside. N154 carries N-linked (GlcNAc...) asparagine glycosylation. A run of 7 repeats spans residues 194–205, 213–224, 230–241, 248–259, 263–273, 277–287, and 291–301. The tract at residues 194–259 is 4 X approximate repeats; that stretch reads KQTGSLYSDW…DAKKPEDWDD (66 aa). Composition is skewed to basic and acidic residues over residues 213 to 235 and 241 to 255; these read DPSA…EDTK and DIPK…KKPE. Residues 213 to 281 are disordered; that stretch reads DPSAKKPEDW…NPEYNGEWKP (69 aa). Residues 263–301 form a 3 X approximate repeats region; the sequence is GEWTAPTIPNPEYNGEWKPKKIKNPAYKGKWKAPMIDNP. E321 provides a ligand contact to an alpha-D-glucoside. Residues 348-378 are compositionally biased toward basic and acidic residues; it reads EETWGKHKDAEKAAFDEAEKKREEEESKDAP. The interval 348-425 is disordered; that stretch reads EETWGKHKDA…EETDAAHDEL (78 aa). Residues 379-398 are compositionally biased toward acidic residues; that stretch reads AESDAEEEAEDDDNEGDDSD. Phosphoserine occurs at positions 381 and 397. A glycan (N-linked (GlcNAc...) asparagine) is linked at N399. Over residues 399–412 the composition is skewed to basic and acidic residues; sequence NESKSEETKEAEET. The Prevents secretion from ER motif lies at 422–425; that stretch reads HDEL.

It belongs to the calreticulin family.

Its subcellular location is the endoplasmic reticulum lumen. Functionally, molecular calcium-binding chaperone promoting folding, oligomeric assembly and quality control in the ER via the calreticulin/calnexin cycle. This lectin may interact transiently with almost all of the monoglucosylated glycoproteins that are synthesized in the ER. This Arabidopsis thaliana (Mouse-ear cress) protein is Calreticulin-1 (CRT1).